Reading from the N-terminus, the 258-residue chain is 2-succinyl-6-hydroxy-2,4-cyclohexadiene-1-carboxylate synthase (258 aa).

This sequence belongs to the AB hydrolase superfamily. MenH family. As to quaternary structure, monomer.

The enzyme catalyses 5-enolpyruvoyl-6-hydroxy-2-succinyl-cyclohex-3-ene-1-carboxylate = (1R,6R)-6-hydroxy-2-succinyl-cyclohexa-2,4-diene-1-carboxylate + pyruvate. Its pathway is quinol/quinone metabolism; 1,4-dihydroxy-2-naphthoate biosynthesis; 1,4-dihydroxy-2-naphthoate from chorismate: step 3/7. The protein operates within quinol/quinone metabolism; menaquinone biosynthesis. Functionally, catalyzes a proton abstraction reaction that results in 2,5-elimination of pyruvate from 2-succinyl-5-enolpyruvyl-6-hydroxy-3-cyclohexene-1-carboxylate (SEPHCHC) and the formation of 2-succinyl-6-hydroxy-2,4-cyclohexadiene-1-carboxylate (SHCHC). The protein is 2-succinyl-6-hydroxy-2,4-cyclohexadiene-1-carboxylate synthase of Enterobacter sp. (strain 638).